Reading from the N-terminus, the 363-residue chain is Chorismate synthase (363 aa).

Residues R48 and R54 each contribute to the NADP(+) site. Residues 125–127 (RSS), 237–238 (NA), G277, 292–296 (KPTSS), and R318 each bind FMN.

This sequence belongs to the chorismate synthase family. In terms of assembly, homotetramer. FMNH2 is required as a cofactor.

It carries out the reaction 5-O-(1-carboxyvinyl)-3-phosphoshikimate = chorismate + phosphate. It participates in metabolic intermediate biosynthesis; chorismate biosynthesis; chorismate from D-erythrose 4-phosphate and phosphoenolpyruvate: step 7/7. In terms of biological role, catalyzes the anti-1,4-elimination of the C-3 phosphate and the C-6 proR hydrogen from 5-enolpyruvylshikimate-3-phosphate (EPSP) to yield chorismate, which is the branch point compound that serves as the starting substrate for the three terminal pathways of aromatic amino acid biosynthesis. This reaction introduces a second double bond into the aromatic ring system. The sequence is that of Chorismate synthase from Pseudomonas paraeruginosa (strain DSM 24068 / PA7) (Pseudomonas aeruginosa (strain PA7)).